Here is a 160-residue protein sequence, read N- to C-terminus: S-ribosylhomocysteine lyase (160 aa).

3 residues coordinate Fe cation: histidine 57, histidine 61, and cysteine 127.

Belongs to the LuxS family. Homodimer. The cofactor is Fe cation.

The enzyme catalyses S-(5-deoxy-D-ribos-5-yl)-L-homocysteine = (S)-4,5-dihydroxypentane-2,3-dione + L-homocysteine. Involved in the synthesis of autoinducer 2 (AI-2) which is secreted by bacteria and is used to communicate both the cell density and the metabolic potential of the environment. The regulation of gene expression in response to changes in cell density is called quorum sensing. Catalyzes the transformation of S-ribosylhomocysteine (RHC) to homocysteine (HC) and 4,5-dihydroxy-2,3-pentadione (DPD). The sequence is that of S-ribosylhomocysteine lyase from Streptococcus suis (strain 98HAH33).